The following is a 146-amino-acid chain: Cytochrome c-556 (146 aa).

The signal sequence occupies residues 1–24 (MCMKLKTITAAMLFGCLCAGAVYA). The heme c site is built by M35, C135, C138, and H139.

As to quaternary structure, monomer. In terms of processing, binds 1 heme c group covalently per subunit.

Low-spin monoheme cytochrome c. The chain is Cytochrome c-556 from Agrobacterium fabrum (strain C58 / ATCC 33970) (Agrobacterium tumefaciens (strain C58)).